A 116-amino-acid polypeptide reads, in one-letter code: Protein V2 (116 aa).

The protein belongs to the geminiviridae protein AV2/V2 family. Interacts with host SGS3.

The protein resides in the host cytoplasm. Its subcellular location is the host perinuclear region. Through its interaction with host SGS3, acts as a suppressor of RNA-mediated gene silencing, also known as post-transcriptional gene silencing (PTGS), a mechanism of plant viral defense that limits the accumulation of viral RNAs. This Tomato yellow leaf curl virus (strain Israel) (TYLCV) protein is Protein V2.